Here is a 562-residue protein sequence, read N- to C-terminus: F-box and WD repeat domain-containing 11-A (562 aa).

The tract at residues Gly-87–Gln-136 is homodimerization domain D. Residues Asp-149–Leu-187 form the F-box domain. WD repeat units follow at residues Arg-256–Val-295, Leu-296–Thr-335, Leu-336–Leu-375, Leu-379–Thr-418, Leu-419–Val-458, Leu-459–Gln-491, and Leu-508–Asp-538.

Self-associates. Component of the SCF(FBXW11) complex.

The protein resides in the cytoplasm. It is found in the nucleus. It functions in the pathway protein modification; protein ubiquitination. Functionally, substrate recognition component of a SCF (SKP1-CUL1-F-box protein) E3 ubiquitin-protein ligase complex which mediates the ubiquitination and subsequent proteasomal degradation of target proteins. Probably recognizes and binds to phosphorylated target proteins: the interaction with substrates requires the phosphorylation of the two serine residues in the substrates' destruction motif D-S-G-X(2,3,4)-S. SCF(FBXW11) mediates the ubiquitination of phosphorylated CTNNB1 and participates in Wnt signaling regulation. Participates in Wnt signaling regulation, and plays a role in eye and jaw development. SCF(FBXW11) plays a key role in NF-kappa-B activation by mediating ubiquitination of phosphorylated NFKBIA, leading to its degradation by the proteasome, thereby allowing the associated NF-kappa-B complex to translocate into the nucleus and to activate transcription. The chain is F-box and WD repeat domain-containing 11-A from Danio rerio (Zebrafish).